A 65-amino-acid chain; its full sequence is Large ribosomal subunit protein bL35 (65 aa).

This sequence belongs to the bacterial ribosomal protein bL35 family.

This is Large ribosomal subunit protein bL35 from Paraburkholderia phytofirmans (strain DSM 17436 / LMG 22146 / PsJN) (Burkholderia phytofirmans).